A 631-amino-acid polypeptide reads, in one-letter code: Peptide-N(4)-(N-acetyl-beta-glucosaminyl)asparagine amidase (631 aa).

A PUB domain is found at 34 to 97; the sequence is EAVRILLVLL…PSSNAYTLPT (64 aa). Position 126 is a phosphoserine (Ser126). 4 residues coordinate Zn(2+): Cys246, Cys249, Cys272, and Cys273. Cys296 serves as the catalytic Nucleophile. Catalysis depends on residues His323 and Asp340. The PAW domain maps to 441–631; that stretch reads ELKGRSSGSL…YPFDLQVQLH (191 aa).

Belongs to the transglutaminase-like superfamily. PNGase family. Zn(2+) serves as cofactor.

The protein localises to the cytoplasm. It carries out the reaction Hydrolysis of an N(4)-(acetyl-beta-D-glucosaminyl)asparagine residue in which the glucosamine residue may be further glycosylated, to yield a (substituted) N-acetyl-beta-D-glucosaminylamine and a peptide containing an aspartate residue.. Its function is as follows. Specifically deglycosylates the denatured form of N-linked glycoproteins in the cytoplasm and assists their proteasome-mediated degradation. Cleaves the beta-aspartyl-glucosamine (GlcNAc) of the glycan and the amide side chain of Asn, converting Asn to Asp. Prefers proteins containing high-mannose over those bearing complex type oligosaccharides. Can recognize misfolded proteins in the endoplasmic reticulum that are exported to the cytosol to be destroyed and deglycosylate them, while it has no activity toward native proteins. Deglycosylation is a prerequisite for subsequent proteasome-mediated degradation of some, but not all, misfolded glycoproteins. In Drosophila melanogaster (Fruit fly), this protein is Peptide-N(4)-(N-acetyl-beta-glucosaminyl)asparagine amidase (Pngl).